A 282-amino-acid polypeptide reads, in one-letter code: Shikimate dehydrogenase (NADP(+)) (282 aa).

Shikimate is bound by residues 16-18 (SLS) and T63. K67 functions as the Proton acceptor in the catalytic mechanism. The shikimate site is built by N88 and D103. NADP(+) contacts are provided by residues 128–132 (GAGGA) and G243.

It belongs to the shikimate dehydrogenase family. In terms of assembly, homodimer.

The enzyme catalyses shikimate + NADP(+) = 3-dehydroshikimate + NADPH + H(+). Its pathway is metabolic intermediate biosynthesis; chorismate biosynthesis; chorismate from D-erythrose 4-phosphate and phosphoenolpyruvate: step 4/7. Involved in the biosynthesis of the chorismate, which leads to the biosynthesis of aromatic amino acids. Catalyzes the reversible NADPH linked reduction of 3-dehydroshikimate (DHSA) to yield shikimate (SA). This Xylella fastidiosa (strain 9a5c) protein is Shikimate dehydrogenase (NADP(+)).